Here is a 44-residue protein sequence, read N- to C-terminus: Large ribosomal subunit protein bL36 (44 aa).

This sequence belongs to the bacterial ribosomal protein bL36 family.

The polypeptide is Large ribosomal subunit protein bL36 (Pseudoalteromonas translucida (strain TAC 125)).